The sequence spans 258 residues: Protein OS-9 homolog (258 aa).

Residues 1 to 18 (MNWTSLVYLWFIFKSIFA) form the signal peptide. Residues Asn-2, Asn-51, and Asn-70 are each glycosylated (N-linked (GlcNAc...) asparagine). One can recognise an MRH domain in the interval 114–237 (TSCVFSFNLH…HINVPKLCSL (124 aa)). Cys-116 and Cys-132 form a disulfide bridge. Positions 127 and 139 each coordinate a mannooligosaccharide derivative. A glycan (N-linked (GlcNAc...) asparagine) is linked at Asn-165. 2 disulfides stabilise this stretch: Cys-193–Cys-223 and Cys-208–Cys-235. Residues Asp-194, Arg-200, Glu-219, and Tyr-225 each contribute to the a mannooligosaccharide derivative site.

The protein belongs to the OS-9 family. Interacts with missfolded ER lumenal proteins.

Its subcellular location is the endoplasmic reticulum membrane. Its function is as follows. Lectin involved in the quality control of the secretory pathway. As a member of the endoplasmic reticulum-associated degradation lumenal (ERAD-L) surveillance system, targets misfolded endoplasmic reticulum lumenal glycoproteins for degradation. The sequence is that of Protein OS-9 homolog (YOS9) from Candida albicans (strain SC5314 / ATCC MYA-2876) (Yeast).